Reading from the N-terminus, the 175-residue chain is uncharacterized protein (175 aa).

This is an uncharacterized protein from Escherichia coli.